The chain runs to 321 residues: Lipoyl synthase (321 aa).

7 residues coordinate [4Fe-4S] cluster: Cys-68, Cys-73, Cys-79, Cys-94, Cys-98, Cys-101, and Ser-308. One can recognise a Radical SAM core domain in the interval Phe-80–Thr-297.

Belongs to the radical SAM superfamily. Lipoyl synthase family. [4Fe-4S] cluster is required as a cofactor.

The protein localises to the cytoplasm. The catalysed reaction is [[Fe-S] cluster scaffold protein carrying a second [4Fe-4S](2+) cluster] + N(6)-octanoyl-L-lysyl-[protein] + 2 oxidized [2Fe-2S]-[ferredoxin] + 2 S-adenosyl-L-methionine + 4 H(+) = [[Fe-S] cluster scaffold protein] + N(6)-[(R)-dihydrolipoyl]-L-lysyl-[protein] + 4 Fe(3+) + 2 hydrogen sulfide + 2 5'-deoxyadenosine + 2 L-methionine + 2 reduced [2Fe-2S]-[ferredoxin]. It participates in protein modification; protein lipoylation via endogenous pathway; protein N(6)-(lipoyl)lysine from octanoyl-[acyl-carrier-protein]: step 2/2. In terms of biological role, catalyzes the radical-mediated insertion of two sulfur atoms into the C-6 and C-8 positions of the octanoyl moiety bound to the lipoyl domains of lipoate-dependent enzymes, thereby converting the octanoylated domains into lipoylated derivatives. In Shewanella frigidimarina (strain NCIMB 400), this protein is Lipoyl synthase.